The primary structure comprises 376 residues: Heme chaperone HemW (376 aa).

The Radical SAM core domain occupies 1 to 236 (MFKLPPISLY…LKQSGYKKYE (236 aa)). Position 10 (Y10) interacts with S-adenosyl-L-methionine. Residues C16, C20, and C23 each coordinate [4Fe-4S] cluster. Residues G66, 67-68 (GT), E99, Q126, R138, and D162 contribute to the S-adenosyl-L-methionine site.

This sequence belongs to the anaerobic coproporphyrinogen-III oxidase family. HemW subfamily. [4Fe-4S] cluster is required as a cofactor.

It is found in the cytoplasm. In terms of biological role, probably acts as a heme chaperone, transferring heme to an unknown acceptor. Binds one molecule of heme per monomer, possibly covalently. Binds 1 [4Fe-4S] cluster. The cluster is coordinated with 3 cysteines and an exchangeable S-adenosyl-L-methionine. This Buchnera aphidicola subsp. Schizaphis graminum (strain Sg) protein is Heme chaperone HemW.